Here is a 290-residue protein sequence, read N- to C-terminus: Endoplasmic reticulum-Golgi intermediate compartment protein 1 (290 aa).

Residues 1-26 lie on the Cytoplasmic side of the membrane; it reads MPFDFRRFDIYRKVPKDLTQPTYTGA. The helical transmembrane segment at 27–47 threads the bilayer; it reads IISICCCLFILFLFLSELTGF. The Lumenal portion of the chain corresponds to 48–254; it reads ITTEVVNELY…RRQPLYRFIT (207 aa). N-linked (GlcNAc...) asparagine glycosylation is present at Asn-74. Residues 255-275 traverse the membrane as a helical segment; it reads TICAIIGGTFTVAGILDSCIF. Topologically, residues 276 to 290 are cytoplasmic; sequence TASEAWKKIQLGKMH.

It belongs to the ERGIC family. As to quaternary structure, may form a heteromeric complex composed of ERGIC1, ERGIC2 and ERGIC3. Within the complex, the interaction with ERGIC3 is direct. Interacts with ERGIC3/ERV46. N-glycosylated.

Its subcellular location is the endoplasmic reticulum membrane. It is found in the endoplasmic reticulum-Golgi intermediate compartment membrane. The protein localises to the golgi apparatus membrane. Functionally, possible role in transport between endoplasmic reticulum and Golgi. This is Endoplasmic reticulum-Golgi intermediate compartment protein 1 (ERGIC1) from Homo sapiens (Human).